Consider the following 355-residue polypeptide: N6-mAMP deaminase (355 aa).

2 residues coordinate Zn(2+): histidine 13 and histidine 15. N(6)-methyl-AMP-binding positions include histidine 15, asparagine 17, histidine 65, threonine 97–lysine 100, aspartate 160, and glycine 190. Histidine 217 provides a ligand contact to Zn(2+). N(6)-methyl-AMP contacts are provided by glutamate 220, aspartate 295, and aspartate 296. The Proton donor role is filled by glutamate 220. Aspartate 295 contacts Zn(2+).

This sequence belongs to the metallo-dependent hydrolases superfamily. Adenosine and AMP deaminases family. In terms of assembly, monomer. Zn(2+) is required as a cofactor.

It is found in the cytoplasm. The protein resides in the cytosol. The catalysed reaction is N(6)-methyl-AMP + H2O + H(+) = IMP + methylamine. In terms of biological role, catalyzes the hydrolysis of the free cytosolic methylated adenosine nucleotide N(6)-methyl-AMP (N6-mAMP) to produce inositol monophosphate (IMP) and methylamine. Is required for the catabolism of cytosolic N6-mAMP, which is derived from the degradation of mRNA containing N6-methylated adenine (m6A). Does not possess deaminase activity toward adenosine, AMP, N6-methyladenosine, or N6-mATP in vitro. This Arabidopsis thaliana (Mouse-ear cress) protein is N6-mAMP deaminase.